The sequence spans 340 residues: MREPGFWHRPPSLVSRLLLPIAAIYGNIAAARMQKAGTTVGVPVLCVGNYHMGGAGKTPTTLALVALLREFGETPVVLSRGYGGRLQGPVQVDPSRHSAADIGDEPLMMARRLAVVVARDRTDGAALACALGATVILMDDGFQNPALTKDASLIVVDSHRSIGNGSVFPAGPLRAPLPLQVARTDALVVVGDGAAADGLAQQITTKGGVVLRARLVPEPASVEALRGRRVLAFAGIGDPARFVATLRGSGVEVVEQRAFADHHPFTAEELAELAAAAKRDGLTLVTTEKDLARIGRAQQALGVEIVPFAVTLAFGDEAKLRLFLLDRLNGARAAKLAGRR.

51-58 contributes to the ATP binding site; it reads HMGGAGKT.

Belongs to the LpxK family.

It catalyses the reaction a lipid A disaccharide + ATP = a lipid IVA + ADP + H(+). It functions in the pathway glycolipid biosynthesis; lipid IV(A) biosynthesis; lipid IV(A) from (3R)-3-hydroxytetradecanoyl-[acyl-carrier-protein] and UDP-N-acetyl-alpha-D-glucosamine: step 6/6. Its function is as follows. Transfers the gamma-phosphate of ATP to the 4'-position of a tetraacyldisaccharide 1-phosphate intermediate (termed DS-1-P) to form tetraacyldisaccharide 1,4'-bis-phosphate (lipid IVA). The sequence is that of Tetraacyldisaccharide 4'-kinase from Rhodopseudomonas palustris (strain TIE-1).